We begin with the raw amino-acid sequence, 545 residues long: Membrane protein insertase YidC (545 aa).

4 helical membrane passes run 350-370 (IIGN…AVLY), 424-444 (LPML…FASV), 461-481 (ADPY…QTYL), and 498-518 (PLVF…YWVV).

It belongs to the OXA1/ALB3/YidC family. Type 1 subfamily. Interacts with the Sec translocase complex via SecD. Specifically interacts with transmembrane segments of nascent integral membrane proteins during membrane integration.

It is found in the cell inner membrane. Functionally, required for the insertion and/or proper folding and/or complex formation of integral membrane proteins into the membrane. Involved in integration of membrane proteins that insert both dependently and independently of the Sec translocase complex, as well as at least some lipoproteins. Aids folding of multispanning membrane proteins. The polypeptide is Membrane protein insertase YidC (Neisseria meningitidis serogroup C (strain 053442)).